The following is a 277-amino-acid chain: uncharacterized protein (277 aa).

2 disordered regions span residues 33 to 168 (KNDN…VTTR) and 210 to 277 (NKLL…PIEF). Residues 34–45 (NDNDERTAHEES) are compositionally biased toward basic and acidic residues. Basic residues predominate over residues 86 to 99 (LKSKSKRKTKKGGS). Composition is skewed to basic and acidic residues over residues 100 to 113 (KPREENVNTEKHIV), 151 to 168 (AKELSYDELKDKLEVTTR), and 216 to 230 (TNEDEINKSQRNKEK). Positions 231 to 241 (DRKRRERRTAR) are enriched in basic residues. Over residues 242–258 (RKDERKQEKKQEKKQDN) the composition is skewed to basic and acidic residues. Positions 259-271 (KTSQSFPSSTDMN) are enriched in polar residues.

The protein resides in the cytoplasm. This is an uncharacterized protein from Saccharomyces cerevisiae (strain ATCC 204508 / S288c) (Baker's yeast).